The primary structure comprises 427 residues: Serine--tRNA ligase (427 aa).

235 to 237 (TAE) contacts L-serine. ATP-binding positions include 266–268 (RRE) and Val-282. Residue Glu-289 coordinates L-serine. Position 353–356 (353–356 (EASS)) interacts with ATP. An L-serine-binding site is contributed by Ser-389.

Belongs to the class-II aminoacyl-tRNA synthetase family. Type-1 seryl-tRNA synthetase subfamily. Homodimer. The tRNA molecule binds across the dimer.

It localises to the cytoplasm. It catalyses the reaction tRNA(Ser) + L-serine + ATP = L-seryl-tRNA(Ser) + AMP + diphosphate + H(+). The catalysed reaction is tRNA(Sec) + L-serine + ATP = L-seryl-tRNA(Sec) + AMP + diphosphate + H(+). It functions in the pathway aminoacyl-tRNA biosynthesis; selenocysteinyl-tRNA(Sec) biosynthesis; L-seryl-tRNA(Sec) from L-serine and tRNA(Sec): step 1/1. Functionally, catalyzes the attachment of serine to tRNA(Ser). Is also able to aminoacylate tRNA(Sec) with serine, to form the misacylated tRNA L-seryl-tRNA(Sec), which will be further converted into selenocysteinyl-tRNA(Sec). The polypeptide is Serine--tRNA ligase (Chlorobium phaeobacteroides (strain BS1)).